The primary structure comprises 701 residues: DNA ligase (701 aa).

NAD(+) contacts are provided by residues Asp-50–Asp-54, Ser-99–Leu-100, and Glu-130. Lys-132 (N6-AMP-lysine intermediate) is an active-site residue. NAD(+)-binding residues include Arg-153, Glu-187, Lys-301, and Lys-325. Zn(2+) contacts are provided by Cys-419, Cys-422, Cys-437, and Cys-442. The region spanning Asn-626–Asn-701 is the BRCT domain.

It belongs to the NAD-dependent DNA ligase family. LigA subfamily. Requires Mg(2+) as cofactor. It depends on Mn(2+) as a cofactor.

The enzyme catalyses NAD(+) + (deoxyribonucleotide)n-3'-hydroxyl + 5'-phospho-(deoxyribonucleotide)m = (deoxyribonucleotide)n+m + AMP + beta-nicotinamide D-nucleotide.. DNA ligase that catalyzes the formation of phosphodiester linkages between 5'-phosphoryl and 3'-hydroxyl groups in double-stranded DNA using NAD as a coenzyme and as the energy source for the reaction. It is essential for DNA replication and repair of damaged DNA. The sequence is that of DNA ligase from Malacoplasma penetrans (strain HF-2) (Mycoplasma penetrans).